The primary structure comprises 323 residues: UDP-glucuronate 4-epimerase (323 aa).

11–13 (GFI) is an NAD(+) binding site. The active-site Proton acceptor is the Y152. K156 serves as a coordination point for NAD(+).

It belongs to the NAD(P)-dependent epimerase/dehydratase family. It depends on NAD(+) as a cofactor.

It catalyses the reaction UDP-alpha-D-glucuronate = UDP-alpha-D-galacturonate. Functionally, catalyzes the interconversion of UDP-D-glucuronic acid (UDP-GlcA) and UDP-D-galacturonic acid (UDP-GalA). This chain is UDP-glucuronate 4-epimerase, found in Thermodesulfobacterium geofontis (strain OPF15).